The following is a 281-amino-acid chain: Bifunctional N-acyl-homoserine lactone acylase/prephenate dehydratase (281 aa).

The 176-residue stretch at 6–181 folds into the Prephenate dehydratase domain; it reads IIAFQGRPGA…NTTRFYIASR (176 aa). The ACT domain maps to 196 to 273; sequence TLLFRVNNQP…EQQEILGVYP (78 aa). L-phenylalanine is bound by residues Ala-207, Leu-208, Asn-221, and Met-222.

As to quaternary structure, homodimer.

The catalysed reaction is an N-acyl-L-homoserine lactone + H2O = L-homoserine lactone + a carboxylate. It catalyses the reaction prephenate + H(+) = 3-phenylpyruvate + CO2 + H2O. It participates in amino-acid biosynthesis; L-phenylalanine biosynthesis; phenylpyruvate from prephenate: step 1/1. Multifunctional enzyme that acts on N-acyl-homoserine lactones (AHLs), beta-lactam antibiotics and shows prephenate dehydratase activity. Acts as an acylase on AHL and hydrolyzes the amide bond of the acyl side-chain of AHL molecules, releasing homoserine lactone (HSL) and the fatty acid. Can use different 3-oxo-acyl homoserine lactones, such as 3-oxo-decanoyl homoserine lactone, which is the preferred substrate, 3-oxo-octanoyl homoserine lactone, 3-oxo-hexanoyl homoserine lactone and 3-oxo-dodecanoyl homoserine lactone. It can also degrade various beta-lactam antibiotics, including penicillin G, amoxicillin and ampicillin, but not cefotaxime. In addition, it can complement a phenylalanine auxotrophic E.coli mutant, which carries a kanamycin gene inserted into pheA, suggesting that GqqA can also function as a prephenate dehydratase. Involved in bacterial quorum quenching (QQ) and cellulose biofilm formation. This is Bifunctional N-acyl-homoserine lactone acylase/prephenate dehydratase from Komagataeibacter europaeus (Gluconacetobacter europaeus).